Reading from the N-terminus, the 521-residue chain is uncharacterized protein (521 aa).

The disordered stretch occupies residues 1–25; the sequence is MLQRSLGVNGRKLAMSARSAKRERK. Transmembrane regions (helical) follow at residues 68 to 88, 114 to 134, 160 to 180, 192 to 212, 290 to 310, and 399 to 419; these read GAVWVLPTFGVAIGLGSGAVL, VLIVVSATMITTIGIVFSLTV, VVLAIFACTFAYSTGGLHTVG, VAVTGSLALAFVSIAALIYFL, ALLVTFVGDYVTAGGLLGWCW, and LLFWLPYPSFATYLHVGCAQI.

Its subcellular location is the cell membrane. This is an uncharacterized protein from Mycobacterium tuberculosis (strain CDC 1551 / Oshkosh).